Here is a 1678-residue protein sequence, read N- to C-terminus: Nuclear pore complex protein Nup98-Nup96 (1678 aa).

The span at 1-11 (MFGQNKSFGSS) shows a compositional bias: low complexity. 5 disordered regions span residues 1–41 (MFGQ…QPAN), 68–100 (SSIF…FGST), 301–366 (TTGS…GAPA), 441–473 (FGNT…TQAT), and 603–631 (SKEA…RSVH). The segment covering 12–22 (SFGGGSSGSGL) has biased composition (gly residues). Low complexity-rich tracts occupy residues 23–38 (FGQN…LFGQ) and 73–83 (SPQQPQNNQSS). Positions 306 to 329 (LFGNQQPQTNTGGSLFGNTQNQNQ) are enriched in polar residues. Low complexity predominate over residues 345–366 (FGQAQQQPQQQSSGFSFGGAPA). Polar residues-rich tracts occupy residues 456–473 (SQPQ…TQAT) and 615–628 (RNST…LTNR). In terms of domain architecture, Peptidase S59 spans 777–919 (KPDYFSLPTI…GSWVFRVDHF (143 aa)). Serine 920 serves as the catalytic Nucleophile.

Belongs to the nucleoporin GLFG family. In terms of assembly, part of the NPC. The Nup98 and Nup96 chains are autoproteolytically processed from a single precursor protein.

The protein localises to the cytoplasmic granule. It is found in the nucleus membrane. It localises to the nucleus. Its subcellular location is the nuclear pore complex. The protein resides in the nucleus envelope. The protein localises to the chromosome. Nup98 and Nup96 play a role in the bidirectional transport across the nucleoporin complex (NPC). Required for the nuclear import of hcp-4 during mitotic prophase, this step is essential for centrosome assembly and resolution. Regulates nucleoporin npp-5 localization to the nuclear membrane during interphase and to kinetochores during metaphase. Has a role in P granule integrity; may promote the 'liquid phase' of P granules by increasing the number of interacting RNA-protein complexes. Binds nos-2 mRNA, probably indirectly, and promotes its accumulation in P granules. The polypeptide is Nuclear pore complex protein Nup98-Nup96 (Caenorhabditis elegans).